The chain runs to 519 residues: Ribonuclease Y (519 aa).

A helical transmembrane segment spans residues 6–26; the sequence is VPFYLLIFLVGIGLGVLTFWA. A KH domain is found at 209-272; it reads TVCTVTIPNE…HIAKMALTEL (64 aa). An HD domain is found at 335-428; sequence VLDHSLEVSH…CSAADAISAS (94 aa).

The protein belongs to the RNase Y family.

The protein localises to the cell membrane. In terms of biological role, endoribonuclease that initiates mRNA decay. This Protochlamydia amoebophila (strain UWE25) protein is Ribonuclease Y.